Reading from the N-terminus, the 279-residue chain is Prostatic spermine-binding protein (279 aa).

The first 17 residues, 1–17 (MLLLVTLALLAGPTCRA), serve as a signal peptide directing secretion. Pyrrolidone carboxylic acid is present on Q18. The Jacalin-type lectin domain maps to 18–151 (QNILGNNVGT…LNGMGFKWKN (134 aa)). A glycan (N-linked (GlcNAc...) asparagine) is linked at N62. Composition is skewed to acidic residues over residues 160-177 (DDDKEDDDDEHDDDNEED) and 185-279 (NDHD…EEEE). The interval 160 to 279 (DDDKEDDDDE…DDDNGDEEEE (120 aa)) is disordered.

It to mouse SBP. Prostate.

Functionally, spermine-binding protein is an androgen regulated ventral prostate glycoprotein that binds various polyamines. In Rattus norvegicus (Rat), this protein is Prostatic spermine-binding protein (Sbp).